Reading from the N-terminus, the 802-residue chain is MAAKLTRLHSLRERLGATFSSHPNELIALFSRYVHQGKGMLQRHQLLAEFDALFDSDKEKYAPFEDILRAAQEAIVLPPWVALAIRPRPGVWDYIRVNVSELAVEELSVSEYLAFKEQLVDGQSNSNFVLELDFEPFNASFPRPSMSKSIGNGVQFLNRHLSSKLFQDKESLYPLLNFLKAHNYKGTTMMLNDRIQSLRGLQSSLRKAEEYLLSVPQDTPYSEFNHRFQELGLEKGWGDTAKRVLDTLHLLLDLLEAPDPANLEKFLGTIPMMFNVVILSPHGYFAQSNVLGYPDTGGQVVYILDQVRALENEMLLRIKQQGLDITPKILIVTRLLPDAAGTTCGQRLEKVIGTEHTDIIRVPFRNENGILRKWISRFDVWPYLETYTEDVSSEIMKEMQAKPDLIIGNYSDGNLVATLLAHKLGVTQCTIAHALEKTKYPNSDIYLDKFDSQYHFSCQFTADLIAMNHTDFIITSTFQEIAGSKDTVGQYESHIAFTLPGLYRVVHGIDVFDPKFNIVSPGADMSVYYPYTETDKRLTAFHPEIEELIYSDVENSEHKFVLKDKKKPIIFSMARLDRVKNMTGLVEMYGKNARLRELANLVIVAGDHGKESKDREEQAEFKKMYSLIDEYKLKGHIRWISAQMNRVRNGELYRYICDTKGAFVQPAFYEAFGLTVIESMTCGLPTIATCHGGPAEIIVDGVSGLHIDPYHSDKAADILVNFFDKCKADPSYWDEISQGGLQRIYEKYTWKLYSERLMTLTGVYGFWKYVSNLERRETRRYIEMFYALKYRSLASQVPLSFD.

The interval 272–749 (MMFNVVILSP…GLQRIYEKYT (478 aa)) is GT-B glycosyltransferase.

It belongs to the glycosyltransferase 1 family. Plant sucrose synthase subfamily.

The enzyme catalyses an NDP-alpha-D-glucose + D-fructose = a ribonucleoside 5'-diphosphate + sucrose + H(+). Its function is as follows. Sucrose-cleaving enzyme that provides UDP-glucose and fructose for various metabolic pathways. Most active in the sink tissues where it is responsible for the breakdown of the arriving sucrose. In Zea mays (Maize), this protein is Sucrose synthase 1 (SH-1).